The chain runs to 1015 residues: MAHIYRLLLLLLSNLWFSTAAQNQSETEWPLHDNGLSKVVQWDHYSFQVNGQRIFIFSGEFHYWRIPVPELWRDILEKVKATGFTAFAFYSSWAYHAPNNSTVDFSTGARDITPIFELAKELGMYMIVRPGPYVNAEASAGGFPLWLMTGEYGSLRNDDPRYTAAWTPYFANMSQITSKYQVTDGHNTLVYQIENEYGQQWIGDPKNRNPNKTAVAYMELLEASARENGITVPLTSNDPNMNSKSWGSDWSNAGGNVDVAGLDSYPSCWTCDVSQCTSTNGEYVPYKVIDYYDYFQEVQPTLPSFMPEFQGGSYNPWAGPEGGCPQDTSAEFANLFYRWNIGQRVTAMSLYMLYGGTNWGAIAAPVTATSYDYSAPISEDRSIGAKYSETKLLALFTRTAKDLTMTEAIGNGTQYTTNTAVRAFELRNPQTNAGFYVTFHTDTTVGGNQAFKLHVNTSVGALTVPKNEGLIQLNGHQSKIIVTDFTLGKRTLLYSTAEVLTYAVFENRPTLVLWVPTGESGEFAIKGAKSGKVENGDGCSGIKFKREKDYLVVNFSQAKGLSVLRLDNGVRVVLLDKAAAYRFWAPALTDDPNVQETETVLVHGPYLVRSASISKTTLALRGDSVEKTTLEIFAPHSVRKITWNGKEVQTSHTPYGSLKATLAAPPDIKLPALTSWRSNDSLPERLPSYDDSGPAWIEANHMTTSNPSPPATFPVLYADEYGFHNGVRLWRGYFNGSASGVFLNIQGGSAFGWSAWLNGHFLDSHLGTATTSQANKTLTFPSSILNPTENVLLIVHDDTGHDQTTGALNPRGILEARLLSNDTSSPPPEFTHWRLAGTAGGESNLDPIRGVFNEDGLFAERMGWHLPGFDDSAWTSENSATSASSALSFTGATVRFFRSVVPLNIPAGLDVSISFVLSTPTAAPKGYRAQLFVNGYQYGRYNPHIGNQVVFPVPPGILDYQGDNTIGLAVWAQTEEGAGIQVDWKVNYVADSSLSVAGFGKGLRPGWTEERLKFA.

The N-terminal stretch at 1 to 20 is a signal peptide; that stretch reads MAHIYRLLLLLLSNLWFSTA. An N-linked (GlcNAc...) asparagine glycan is attached at asparagine 23. Tyrosine 90 is a binding site for substrate. N-linked (GlcNAc...) asparagine glycans are attached at residues asparagine 99 and asparagine 100. The substrate site is built by asparagine 135, alanine 136, and glutamate 137. N-linked (GlcNAc...) asparagine glycosylation occurs at asparagine 172. Asparagine 195 serves as a coordination point for substrate. Glutamate 196 serves as the catalytic Proton donor. An N-linked (GlcNAc...) asparagine glycan is attached at asparagine 211. Tyrosine 265 serves as a coordination point for substrate. An intrachain disulfide couples cysteine 271 to cysteine 324. The active-site Nucleophile is glutamate 308. A substrate-binding site is contributed by tyrosine 373. Residues asparagine 411, asparagine 456, asparagine 554, asparagine 679, asparagine 735, asparagine 775, and asparagine 821 are each glycosylated (N-linked (GlcNAc...) asparagine).

The protein belongs to the glycosyl hydrolase 35 family.

The protein resides in the secreted. The enzyme catalyses Hydrolysis of terminal non-reducing beta-D-galactose residues in beta-D-galactosides.. Functionally, cleaves beta-linked terminal galactosyl residues from gangliosides, glycoproteins, and glycosaminoglycans. In Aspergillus fumigatus (strain CBS 144.89 / FGSC A1163 / CEA10) (Neosartorya fumigata), this protein is Probable beta-galactosidase B (lacB).